A 770-amino-acid polypeptide reads, in one-letter code: Signal transducer and activator of transcription 3 (770 aa).

Ala-2 is modified (N-acetylalanine). Residues Lys-49 and Lys-87 each carry the N6-acetyllysine modification. The short motif at 150–162 (DVRKRVQDLEQKM) is the Essential for nuclear import element. An SH2 domain is found at 580–670 (WNEGYIMGFI…DATNILVSPL (91 aa)). Residues Lys-601, Lys-615, and Lys-631 each carry the allysine; alternate modification. Residues Lys-601, Lys-615, and Lys-631 each carry the N6-acetyllysine; alternate modification. Residue Tyr-640 is modified to Phosphotyrosine; by TYK2. The residue at position 685 (Lys-685) is an Allysine; alternate. Lys-685 carries the N6-acetyllysine; alternate modification. Tyr-705 is subject to Phosphotyrosine; by FER and PTK6. Residue Lys-707 is modified to N6-acetyllysine. Thr-714 carries the post-translational modification Phosphothreonine. Ser-727 carries the post-translational modification Phosphoserine; by DYRK2, NLK, NEK6, IRAK1, RPS6KA5, ZIPK/DAPK3 and PKC/PRKCE.

It belongs to the transcription factor STAT family. As to quaternary structure, forms a homodimer or a heterodimer with a related family member (at least STAT1). Component of a promoter-binding complex composed of STAT3, NFATC3 and NFATC4; complex formation is enhanced by calcineurin. Interacts with IL31RA, NCOA1, PELP1, SIPAR, SOCS7, STATIP1 and TMF1. Interacts with IL23R in presence of IL23. Interacts (via SH2 domain) with NLK. Interacts with ARL2BP; the interaction is enhanced by LIF and JAK1 expression. Interacts with KPNA4 and KPNA5; KPNA4 may be the primary mediator of nuclear import. Interacts with CAV2; the interaction is increased on insulin-induced tyrosine phosphorylation of CAV2 and leads to STAT3 activation. Interacts with ARL2BP; interaction is enhanced with ARL2. Interacts with NEK6. Binds to CDK9 when activated and nuclear. Interacts with BMX. Interacts with ZIPK/DAPK3. Interacts with PIAS3; the interaction occurs on stimulation by IL6, CNTF or OSM and inhibits the DNA binding activity of STAT3. In prostate cancer cells, interacts with PRKCE and promotes DNA binding activity of STAT3. Interacts with STMN3, antagonizing its microtubule-destabilizing activity. Interacts with the 'Lys-129' acetylated form of BIRC5/survivin. Interacts with FER. Interacts (via SH2 domain) with EIF2AK2/PKR (via the kinase catalytic domain). Interacts with FGFR4. Interacts with INPP5F; the interaction is independent of STAT3 Tyr-705 phosphorylation status. Interacts with OCIAD1. Interacts with OCIAD2. Interacts (unphosphorylated or phosphorylated at Ser-727) with PHB1. Interacts and may form heterodimers with NHLH1. Found in a complex with SLC39A6, SLC39A10 and with the 'Ser-727' phosphorylated form of STAT3 throughout mitosis. Interacts (when acetylated) with EP300 (via bromo domain); interaction takes place following STAT3 acetylation by EP300 and promotes enhanceosome assembly. Interacts (when acetylated) with BRD2 (via bromo domain); interaction promotes STAT3 recruitment to chromatin and T-helper Th17 cell differentiation. Interacts with FAM220A/SIPAR; the interaction occurs in both the nucleus and the cytoplasm, is enhanced by IL6 and promotes STAT3 dephosphorylation. Interacts in both unphosphorylated and phosphorylated forms with FAM220A but interacts preferentially in the phosphorylated form in the nucleus. Interacts with PTPN2; the interaction is promoted by FAM220A and leads to STAT3 dephosphorylation which negatively regulates STAT3 transcriptional activator activity. Activated through tyrosine phosphorylation by BMX. Tyrosine phosphorylated in response to IL6, IL11, CNTF, LIF, KITLG/SCF, CSF1, EGF, PDGF, IFN-alpha, LEP and OSM. Activated KIT promotes phosphorylation on tyrosine residues and subsequent translocation to the nucleus. Tyrosine phosphorylated in response to constitutively activated FGFR1, FGFR2, FGFR3 and FGFR4. Phosphorylated on serine upon DNA damage, probably by ATM or ATR. Serine phosphorylation is important for the formation of stable DNA-binding STAT3 homodimers and maximal transcriptional activity. ARL2BP may participate in keeping the phosphorylated state of STAT3 within the nucleus. Tyrosine phosphorylated upon stimulation with EGF. Upon LPS challenge, phosphorylated within the nucleus by IRAK1. Upon UV-A treatment, phosphorylated on Ser-727 by RPS6KA5. Dephosphorylation on tyrosine residues by PTPN2 negatively regulates IL6/interleukin-6 signaling. Phosphorylation at Tyr-705 by PTK6, isoform M2 of PKM (PKM2) or FER leads to an increase of its transcriptional activity. Phosphorylation at Tyr-705 is increased in the presence of calcineurin. Phosphorylation at Tyr-640 by TYK2 negatively regulates transcriptional activity. Post-translationally, acetylated on lysine residues by EP300/p300, promoting its activation. Acetylation at Lys-49 and Lys-87 by EP300/p300 promotes its activation. Acetylation at Lys-87 by EP300/p300 promotes its association with BRD2 and recruitment to chromatin. Deacetylated at Lys-49 and Lys-87 by HDAC1. Acetylation at Lys-685 by EP300/p300 promotes its homodimerization and activation. Deacetylated at Lys-685 by HDAC3. Acetylated on lysine residues by CREBBP. Deacetylation by LOXL3 leads to disrupt STAT3 dimerization and inhibit STAT3 transcription activity. Oxidation of lysine residues to allysine on STAT3 preferentially takes place on lysine residues that are acetylated. In terms of processing, some lysine residues are oxidized to allysine by LOXL3, leading to disrupt STAT3 dimerization and inhibit STAT3 transcription activity. Oxidation of lysine residues to allysine on STAT3 preferentially takes place on lysine residues that are acetylated. (Microbial infection) Phosphorylated on Tyr-705 in the presence of S.typhimurium SarA. Expressed in ventricular cardiomyocytes (at protein level). Expressed in the lung (at protein level). Expressed in the liver, spleen and kidney. In terms of tissue distribution, expressed in the liver.

The protein resides in the cytoplasm. The protein localises to the nucleus. Functionally, signal transducer and transcription activator that mediates cellular responses to interleukins, KITLG/SCF, LEP and other growth factors. Once activated, recruits coactivators, such as NCOA1 or MED1, to the promoter region of the target gene. May mediate cellular responses to activated FGFR1, FGFR2, FGFR3 and FGFR4. Upon activation of IL6ST/gp130 signaling by interleukin-6 (IL6), binds to the IL6-responsive elements identified in the promoters of various acute-phase protein genes. Activated by IL31 through IL31RA. Acts as a regulator of inflammatory response by regulating differentiation of naive CD4(+) T-cells into T-helper Th17 or regulatory T-cells (Treg): acetylation promotes its transcription activity and cell differentiation while deacetylation and oxidation of lysine residues by LOXL3 inhibits differentiation. Involved in cell cycle regulation by inducing the expression of key genes for the progression from G1 to S phase, such as CCND1. Mediates the effects of LEP on melanocortin production, body energy homeostasis and lactation. May play an apoptotic role by transctivating BIRC5 expression under LEP activation. Cytoplasmic STAT3 represses macroautophagy by inhibiting EIF2AK2/PKR activity. Plays a crucial role in basal beta cell functions, such as regulation of insulin secretion. Following JAK/STAT signaling activation and as part of a complex with NFATC3 and NFATC4, binds to the alpha-beta E4 promoter region of CRYAB and activates transcription in cardiomyocytes. Plays an important role in host defense in methicillin-resistant S.aureus lung infection by regulating the expression of the antimicrobial lectin REG3G. The polypeptide is Signal transducer and activator of transcription 3 (Mus musculus (Mouse)).